A 299-amino-acid chain; its full sequence is Ficolin-3 (299 aa).

The first 23 residues, 1-23 (MDLLWILPSLWLLLLGGPACLKT), serve as a signal peptide directing secretion. Residues 44 to 81 (PSCPGAPGSPGEKGAPGPQGPPGPPGKMGPKGEPGDPV) are disordered. The Collagen-like domain maps to 48-80 (GAPGSPGEKGAPGPQGPPGPPGKMGPKGEPGDP). Residues Pro-50, Pro-53, Pro-59, Pro-65, Pro-68, and Pro-77 each carry the hydroxyproline modification. Positions 61-70 (PQGPPGPPGK) are enriched in pro residues. A Fibrinogen C-terminal domain is found at 84-299 (LRCQEGPRNC…PYRRVRMMLR (216 aa)). 2 disulfide bridges follow: Cys-86–Cys-110 and Cys-93–Cys-121. Residue Asn-189 is glycosylated (N-linked (GlcNAc...) (complex) asparagine). Ca(2+) is bound by residues Asp-237, Asp-239, Ser-241, and Ser-243. Residues Cys-245 and Cys-258 are joined by a disulfide bond. 258–259 (CY) contacts a carbohydrate.

This sequence belongs to the ficolin lectin family. Homotrimer. May form an octadecamer consisting of an elementary trimer unit. Does not interact with fibronectin, elastin or zymosan. Interacts with MASP1 and MASP2. The N-terminus is blocked. Liver and lung. In liver it is produced by bile duct epithelial cells and hepatocytes. In lung it is produced by both ciliated bronchial epithelial cells and type II alveolar epithelial cells.

It is found in the secreted. Its function is as follows. May function in innate immunity through activation of the lectin complement pathway. Calcium-dependent and GlcNAc-binding lectin. Has affinity with GalNAc, GlcNAc, D-fucose, as mono/oligosaccharide and lipopolysaccharides from S.typhimurium and S.minnesota. The sequence is that of Ficolin-3 (FCN3) from Homo sapiens (Human).